The primary structure comprises 101 residues: Small ribosomal subunit protein uS14 (101 aa).

A disordered region spans residues 46 to 72 (FELNRQPRDASPVRVRNRDSRDGRPRG). Residues 61-70 (RNRDSRDGRP) are compositionally biased toward basic and acidic residues.

This sequence belongs to the universal ribosomal protein uS14 family. In terms of assembly, part of the 30S ribosomal subunit. Contacts proteins S3 and S10.

Its function is as follows. Binds 16S rRNA, required for the assembly of 30S particles and may also be responsible for determining the conformation of the 16S rRNA at the A site. This chain is Small ribosomal subunit protein uS14, found in Corynebacterium diphtheriae (strain ATCC 700971 / NCTC 13129 / Biotype gravis).